Here is a 932-residue protein sequence, read N- to C-terminus: Isoleucine--tRNA ligase (932 aa).

The 'HIGH' region signature appears at 58–68 (PYANGDIHIGH). L-isoleucyl-5'-AMP is bound at residue glutamate 570. A 'KMSKS' region motif is present at residues 611-615 (KMSKS). Lysine 614 is a binding site for ATP. 4 residues coordinate Zn(2+): cysteine 895, cysteine 898, cysteine 915, and cysteine 918.

This sequence belongs to the class-I aminoacyl-tRNA synthetase family. IleS type 1 subfamily. Monomer. Requires Zn(2+) as cofactor.

The protein localises to the cytoplasm. The catalysed reaction is tRNA(Ile) + L-isoleucine + ATP = L-isoleucyl-tRNA(Ile) + AMP + diphosphate. Its function is as follows. Catalyzes the attachment of isoleucine to tRNA(Ile). As IleRS can inadvertently accommodate and process structurally similar amino acids such as valine, to avoid such errors it has two additional distinct tRNA(Ile)-dependent editing activities. One activity is designated as 'pretransfer' editing and involves the hydrolysis of activated Val-AMP. The other activity is designated 'posttransfer' editing and involves deacylation of mischarged Val-tRNA(Ile). This Dechloromonas aromatica (strain RCB) protein is Isoleucine--tRNA ligase.